The following is a 677-amino-acid chain: Methionine--tRNA ligase (677 aa).

A 'HIGH' region motif is present at residues 15 to 25; the sequence is PYANGSIHLGH. Zn(2+) is bound by residues cysteine 146, cysteine 149, cysteine 159, and cysteine 162. The 'KMSKS' region motif lies at 333–337; the sequence is KMSKS. Lysine 336 is a binding site for ATP. In terms of domain architecture, tRNA-binding spans 575 to 677; it reads DFAKVDLRVA…AGAKPGHQVK (103 aa).

Belongs to the class-I aminoacyl-tRNA synthetase family. MetG type 1 subfamily. In terms of assembly, homodimer. It depends on Zn(2+) as a cofactor.

Its subcellular location is the cytoplasm. The catalysed reaction is tRNA(Met) + L-methionine + ATP = L-methionyl-tRNA(Met) + AMP + diphosphate. In terms of biological role, is required not only for elongation of protein synthesis but also for the initiation of all mRNA translation through initiator tRNA(fMet) aminoacylation. In Shigella dysenteriae serotype 1 (strain Sd197), this protein is Methionine--tRNA ligase.